Here is a 1073-residue protein sequence, read N- to C-terminus: Carbamoyl phosphate synthase large chain (1073 aa).

Residues 1–403 are carboxyphosphate synthetic domain; that stretch reads MPKRTDIKSI…SLQKALRGLE (403 aa). ATP-binding residues include arginine 129, arginine 169, glycine 175, glycine 176, glutamate 208, leucine 210, glutamate 215, glycine 241, valine 242, histidine 243, glutamine 285, and glutamate 299. An ATP-grasp 1 domain is found at 133-328; that stretch reads DKAMKSIGLA…IARVAAKLAV (196 aa). Glutamine 285, glutamate 299, and asparagine 301 together coordinate Mg(2+). Residues glutamine 285, glutamate 299, and asparagine 301 each coordinate Mn(2+). An oligomerization domain region spans residues 404–553; sequence VGVCGLDPKL…YSTYEEECEA (150 aa). Residues 554 to 935 form a carbamoyl phosphate synthetic domain region; that stretch reads NPSTRDKIMI…AFAKAQMGAS (382 aa). In terms of domain architecture, ATP-grasp 2 spans 678-869; sequence QQMVERLNLR…LAMIAARVMA (192 aa). Arginine 714, histidine 753, leucine 755, glutamate 760, glycine 785, valine 786, histidine 787, serine 788, glutamine 828, and glutamate 840 together coordinate ATP. Mg(2+) contacts are provided by glutamine 828, glutamate 840, and asparagine 842. Glutamine 828, glutamate 840, and asparagine 842 together coordinate Mn(2+). The MGS-like domain maps to 936–1073; it reads EVLPTGGTAF…LQDLHAGLKA (138 aa). Positions 936–1073 are allosteric domain; the sequence is EVLPTGGTAF…LQDLHAGLKA (138 aa).

It belongs to the CarB family. Composed of two chains; the small (or glutamine) chain promotes the hydrolysis of glutamine to ammonia, which is used by the large (or ammonia) chain to synthesize carbamoyl phosphate. Tetramer of heterodimers (alpha,beta)4. It depends on Mg(2+) as a cofactor. Requires Mn(2+) as cofactor.

The enzyme catalyses hydrogencarbonate + L-glutamine + 2 ATP + H2O = carbamoyl phosphate + L-glutamate + 2 ADP + phosphate + 2 H(+). It carries out the reaction hydrogencarbonate + NH4(+) + 2 ATP = carbamoyl phosphate + 2 ADP + phosphate + 2 H(+). The protein operates within amino-acid biosynthesis; L-arginine biosynthesis; carbamoyl phosphate from bicarbonate: step 1/1. Its pathway is pyrimidine metabolism; UMP biosynthesis via de novo pathway; (S)-dihydroorotate from bicarbonate: step 1/3. Functionally, large subunit of the glutamine-dependent carbamoyl phosphate synthetase (CPSase). CPSase catalyzes the formation of carbamoyl phosphate from the ammonia moiety of glutamine, carbonate, and phosphate donated by ATP, constituting the first step of 2 biosynthetic pathways, one leading to arginine and/or urea and the other to pyrimidine nucleotides. The large subunit (synthetase) binds the substrates ammonia (free or transferred from glutamine from the small subunit), hydrogencarbonate and ATP and carries out an ATP-coupled ligase reaction, activating hydrogencarbonate by forming carboxy phosphate which reacts with ammonia to form carbamoyl phosphate. The sequence is that of Carbamoyl phosphate synthase large chain from Pseudomonas syringae pv. tomato (strain ATCC BAA-871 / DC3000).